The chain runs to 231 residues: Ribosomal RNA small subunit methyltransferase G (231 aa).

S-adenosyl-L-methionine is bound by residues G75, 125–126 (GE), and R140. Over residues 204-213 (AEAEEGDSPE) the composition is skewed to acidic residues. Residues 204–231 (AEAEEGDSPEAADASRGVILELTKKNKG) form a disordered region.

This sequence belongs to the methyltransferase superfamily. RNA methyltransferase RsmG family.

The protein resides in the cytoplasm. Specifically methylates the N7 position of a guanine in 16S rRNA. The chain is Ribosomal RNA small subunit methyltransferase G from Rhodopirellula baltica (strain DSM 10527 / NCIMB 13988 / SH1).